The primary structure comprises 270 residues: Elongation factor Ts (270 aa).

The interval 75-78 (TDFV) is involved in Mg(2+) ion dislocation from EF-Tu.

This sequence belongs to the EF-Ts family.

It localises to the cytoplasm. Its function is as follows. Associates with the EF-Tu.GDP complex and induces the exchange of GDP to GTP. It remains bound to the aminoacyl-tRNA.EF-Tu.GTP complex up to the GTP hydrolysis stage on the ribosome. This is Elongation factor Ts from Cutibacterium acnes (strain DSM 16379 / KPA171202) (Propionibacterium acnes).